Reading from the N-terminus, the 272-residue chain is uncharacterized protein (272 aa).

The AB hydrolase-1 domain maps to 20-133; sequence PVLIFIPGAN…PPINTFLPDS (114 aa).

Belongs to the AB hydrolase superfamily.

This is an uncharacterized protein from Staphylococcus aureus (strain MSSA476).